The chain runs to 116 residues: UPF0342 protein CTC_01059 (116 aa).

The protein belongs to the UPF0342 family.

This Clostridium tetani (strain Massachusetts / E88) protein is UPF0342 protein CTC_01059.